Reading from the N-terminus, the 688-residue chain is Elongation factor G (688 aa).

The tr-type G domain maps to 8-282 (EKTRNIGIIA…AVVDYLPAPC (275 aa)). GTP-binding positions include 17-24 (AHIDAGKT), 81-85 (DTPGH), and 135-138 (NKMD).

The protein belongs to the TRAFAC class translation factor GTPase superfamily. Classic translation factor GTPase family. EF-G/EF-2 subfamily.

It is found in the cytoplasm. Its function is as follows. Catalyzes the GTP-dependent ribosomal translocation step during translation elongation. During this step, the ribosome changes from the pre-translocational (PRE) to the post-translocational (POST) state as the newly formed A-site-bound peptidyl-tRNA and P-site-bound deacylated tRNA move to the P and E sites, respectively. Catalyzes the coordinated movement of the two tRNA molecules, the mRNA and conformational changes in the ribosome. The sequence is that of Elongation factor G from Aster yellows witches'-broom phytoplasma (strain AYWB).